The sequence spans 222 residues: Small ribosomal subunit protein uS5 (222 aa).

A disordered region spans residues 1 to 41; the sequence is MAEQAGAGSAQDNRGGGRDDRGGRGRRDDRGGRGGRDDREK. Residues 15–41 show a composition bias toward basic and acidic residues; that stretch reads GGGRDDRGGRGRRDDRGGRGGRDDREK. The 64-residue stretch at 44–107 folds into the S5 DRBM domain; that stretch reads YLERVVTINR…EEARKNFFRV (64 aa).

It belongs to the universal ribosomal protein uS5 family. In terms of assembly, part of the 30S ribosomal subunit. Contacts proteins S4 and S8.

Its function is as follows. With S4 and S12 plays an important role in translational accuracy. In terms of biological role, located at the back of the 30S subunit body where it stabilizes the conformation of the head with respect to the body. The chain is Small ribosomal subunit protein uS5 from Mycolicibacterium gilvum (strain PYR-GCK) (Mycobacterium gilvum (strain PYR-GCK)).